Reading from the N-terminus, the 255-residue chain is Thiazole synthase (255 aa).

Lys96 serves as the catalytic Schiff-base intermediate with DXP. 1-deoxy-D-xylulose 5-phosphate-binding positions include Gly157, 183–184 (AG), and 205–206 (NT).

This sequence belongs to the ThiG family. Homotetramer. Forms heterodimers with either ThiH or ThiS.

It is found in the cytoplasm. It catalyses the reaction [ThiS sulfur-carrier protein]-C-terminal-Gly-aminoethanethioate + 2-iminoacetate + 1-deoxy-D-xylulose 5-phosphate = [ThiS sulfur-carrier protein]-C-terminal Gly-Gly + 2-[(2R,5Z)-2-carboxy-4-methylthiazol-5(2H)-ylidene]ethyl phosphate + 2 H2O + H(+). The protein operates within cofactor biosynthesis; thiamine diphosphate biosynthesis. In terms of biological role, catalyzes the rearrangement of 1-deoxy-D-xylulose 5-phosphate (DXP) to produce the thiazole phosphate moiety of thiamine. Sulfur is provided by the thiocarboxylate moiety of the carrier protein ThiS. In vitro, sulfur can be provided by H(2)S. This is Thiazole synthase from Bacillus pumilus (strain SAFR-032).